The sequence spans 186 residues: Elongation factor P (186 aa).

The protein belongs to the elongation factor P family.

It is found in the cytoplasm. Its pathway is protein biosynthesis; polypeptide chain elongation. Its function is as follows. Involved in peptide bond synthesis. Stimulates efficient translation and peptide-bond synthesis on native or reconstituted 70S ribosomes in vitro. Probably functions indirectly by altering the affinity of the ribosome for aminoacyl-tRNA, thus increasing their reactivity as acceptors for peptidyl transferase. The sequence is that of Elongation factor P from Prochlorococcus marinus (strain MIT 9312).